The primary structure comprises 482 residues: Caspase-8 (482 aa).

A propeptide spanning residues 1–218 (MDFHSCLYDI…DMWDSPGEQE (218 aa)) is cleaved from the precursor. DED domains follow at residues 2–80 (DFHS…RVLK) and 100–177 (AYRV…RIDD). Phosphoserine is present on residues Ser188 and Ser213. The active site involves His319. Tyr336 is subject to Phosphotyrosine. Cys362 is a catalytic residue. Positions 379 to 388 (LEQEHVLEED) are excised as a propeptide. At Ser390 the chain carries Phosphoserine; by CDK1.

This sequence belongs to the peptidase C14A family. Heterotetramer that consists of two anti-parallel arranged heterodimers, each one formed by a 18 kDa (p18) and a 10 kDa (p10) subunit. Component of the death-induced signaling complex (DISC) composed of cell surface receptor FAS/CD95 or TNFRSF1A, adapter protein FADD and the CASP8 protease; recruitment of CASP8 to the complex is required for processing of CASP8 into the p18 and p10 subunits. Component of the AIM2 PANoptosome complex, a multiprotein complex that drives inflammatory cell death (PANoptosis). Interacts with CFLAR and PEA15. Interacts with RFFL and RNF34; negatively regulate CASP8 through proteasomal degradation. Interacts with TNFAIP8L2. Interacts with CASP8AP2. Interacts with NOL3; decreases CASP8 activity in a mitochondria localization- and phosphorylation-dependent manner and this interaction is dissociated by calcium. Interacts with UBR2. Interacts with RIPK1. Interacts with stimulated TNFRSF10B; this interaction is followed by CASP8 proteolytic cleavage and activation. Generation of the subunits requires association with the death-inducing signaling complex (DISC), whereas additional processing is likely due to the autocatalytic activity of the activated protease. GZMB and CASP10 can be involved in these processing events. Post-translationally, phosphorylation on Ser-389 during mitosis by CDK1 inhibits activation by proteolysis and prevents apoptosis. This phosphorylation occurs in cancer cell lines, as well as in primary breast tissues and lymphocytes.

It localises to the cytoplasm. Its subcellular location is the nucleus. The enzyme catalyses Strict requirement for Asp at position P1 and has a preferred cleavage sequence of (Leu/Asp/Val)-Glu-Thr-Asp-|-(Gly/Ser/Ala).. Its activity is regulated as follows. CASP8 activity is restricted by RIPK1. Functionally, thiol protease that plays a key role in programmed cell death by acting as a molecular switch for apoptosis, necroptosis and pyroptosis, and is required to prevent tissue damage during embryonic development and adulthood. Initiator protease that induces extrinsic apoptosis by mediating cleavage and activation of effector caspases responsible for FAS/CD95-mediated and TNFRSF1A-induced cell death. Cleaves and activates effector caspases CASP3, CASP4, CASP6, CASP7, CASP9 and CASP10. Binding to the adapter molecule FADD recruits it to either receptor FAS/CD95 or TNFRSF1A. The resulting aggregate called the death-inducing signaling complex (DISC) performs CASP8 proteolytic activation. The active dimeric enzyme is then liberated from the DISC and free to activate downstream apoptotic proteases. Proteolytic fragments of the N-terminal propeptide (termed CAP3, CAP5 and CAP6) are likely retained in the DISC. In addition to extrinsic apoptosis, also acts as a negative regulator of necroptosis: acts by cleaving RIPK1 at 'Asp-325', which is crucial to inhibit RIPK1 kinase activity, limiting TNF-induced apoptosis, necroptosis and inflammatory response. Also able to initiate pyroptosis by mediating cleavage and activation of gasdermin-C and -D (GSDMC and GSDMD, respectively): gasdermin cleavage promotes release of the N-terminal moiety that binds to membranes and forms pores, triggering pyroptosis. Initiates pyroptosis following inactivation of MAP3K7/TAK1. Also acts as a regulator of innate immunity by mediating cleavage and inactivation of N4BP1 downstream of TLR3 or TLR4, thereby promoting cytokine production. May participate in the Granzyme B (GZMB) cell death pathways. Cleaves PARP1 and PARP2. This Rattus norvegicus (Rat) protein is Caspase-8.